Consider the following 1035-residue polypeptide: Integrin alpha-9 (1035 aa).

The N-terminal stretch at 1 to 29 is a signal peptide; that stretch reads MGGPAAPRGAGRLRALLLALVVAGIPAGA. The Extracellular portion of the chain corresponds to 30–981; the sequence is YNLDPQRPVH…LEPRGYVVGW (952 aa). FG-GAP repeat units lie at residues 35–96, 111–174, 182–232, 233–289, 290–349, 351–408, and 411–474; these read QRPV…PDRR, SCGK…AKGR, EYKK…NTYL, KLND…SGTL, IKIF…GALE, QLAL…GIVP, and SMKL…LPGS. Cystine bridges form between cysteine 87–cysteine 97, cysteine 142–cysteine 162, and cysteine 179–cysteine 194. Residue asparagine 225 is glycosylated (N-linked (GlcNAc...) asparagine). Ca(2+) contacts are provided by aspartate 312, asparagine 314, aspartate 316, aspartate 320, aspartate 373, aspartate 375, aspartate 377, aspartate 381, aspartate 435, aspartate 437, asparagine 439, and aspartate 443. An N-linked (GlcNAc...) asparagine glycan is attached at asparagine 476. A disulfide bridge connects residues cysteine 482 and cysteine 491. N-linked (GlcNAc...) asparagine glycosylation is present at asparagine 493. A disulfide bridge connects residues cysteine 497 and cysteine 555. The N-linked (GlcNAc...) asparagine glycan is linked to asparagine 612. A disulfide bond links cysteine 620 and cysteine 625. Asparagine 654, asparagine 658, asparagine 672, and asparagine 676 each carry an N-linked (GlcNAc...) asparagine glycan. Cysteine 696 and cysteine 706 are disulfide-bonded. Residues asparagine 807 and asparagine 854 are each glycosylated (N-linked (GlcNAc...) asparagine). Disulfide bonds link cysteine 855/cysteine 891 and cysteine 898/cysteine 903. Asparagine 904 carries an N-linked (GlcNAc...) asparagine glycan. Residues 982-1002 form a helical membrane-spanning segment; that stretch reads IIAISLLVGILIFLLLAVLLW. The Cytoplasmic segment spans residues 1003–1035; sequence KMGFFRRRYKEIIEAEKNRKENEDSWDWVQKNQ. The GFFKR motif signature appears at 1005–1009; that stretch reads GFFRR.

Belongs to the integrin alpha chain family. In terms of assembly, heterodimer of an alpha and a beta subunit. Alpha-9 (ITGA9) associates with beta-1 (ITGB1). Integrin ITGA9:ITGB1 interacts with FBLN5 (via N-terminus). Integrin ITGA9:ITGB1 interacts with SPP1/OPN (via N-terminus). Integrin ITGA9:ITGB1 interacts with TNC/TNFN3 (via the 3rd Fibronectin type-III domain). Integrin ITGA9:ITGB1 interacts with SVEP1/polydom (via Sushi domain 21); thereby inhibits Ca(2+) intracellular signaling and as a result represses vasocontraction. In terms of tissue distribution, expressed in vascular smooth muscle cells (at protein level). Expressed in the airway epithelium (at protein level).

It is found in the membrane. In terms of biological role, integrin alpha-9/beta-1 (ITGA9:ITGB1) is a receptor for VCAM1, cytotactin and osteopontin. It recognizes the sequence A-E-I-D-G-I-E-L in cytotactin. ITGA9:ITGB1 may play a crucial role in SVEP1/polydom-mediated myoblast cell adhesion. Integrin ITGA9:ITGB1 represses PRKCA-mediated L-type voltage-gated channel Ca(2+) influx and ROCK-mediated calcium sensitivity in vascular smooth muscle cells via its interaction with SVEP1, thereby inhibiting vasocontraction. The sequence is that of Integrin alpha-9 (ITGA9) from Homo sapiens (Human).